The following is a 591-amino-acid chain: Glutathione hydrolase (591 aa).

Positions 1–41 are cleaved as a signal peptide; sequence MASKWIEEQPLVHRRDIRISSKSRIAAGLLVLLVLWRYGLP. R122 contacts L-glutamate. 3 N-linked (GlcNAc...) asparagine glycosylation sites follow: N135, N270, and N389. The active-site Nucleophile is T393. L-glutamate contacts are provided by residues T411, E432, and 464–465; that span reads SA. The N-linked (GlcNAc...) asparagine glycan is linked to N534.

Belongs to the gamma-glutamyltransferase family.

It carries out the reaction an N-terminal (5-L-glutamyl)-[peptide] + an alpha-amino acid = 5-L-glutamyl amino acid + an N-terminal L-alpha-aminoacyl-[peptide]. It catalyses the reaction glutathione + H2O = L-cysteinylglycine + L-glutamate. The enzyme catalyses an S-substituted glutathione + H2O = an S-substituted L-cysteinylglycine + L-glutamate. It participates in mycotoxin biosynthesis. Gamma-glutamyltransferase; part of the gene cluster that mediates the biosynthesis of the secondary metabolite ustiloxin B, an antimitotic tetrapeptide. First, ustA is processed by the subtilisin-like endoprotease Kex2 that is outside the ustiloxin B gene cluster, at the C-terminal side of Arg-Lys, after transfer to Golgi apparatus through the endoplasmic reticulum (ER). Cleavage by KEX2 generates 16 peptides YAIG-I to YAIG-XVI. To process the precursor peptide further, at least two peptidases are necessary to cleave the N-terminal and C-terminal sides of the Tyr-Ala-Ile-Gly core peptide which serves as backbone for the synthesis of ustiloxin B, through cyclization and modification of the tyrosine with a non-protein coding amino acid, norvaline. One of the two peptidases must be the serine peptidase ustP; and the other pepdidase is probably ustH. Macrocyclization of the core peptide derived from ustA requires the tyrosinase ustQ, as well as the homologous oxidases ustYa and ustYb, and leads to the production of the first cyclization product N-desmethylustiloxin F. For the formation of N-desmethylustiloxin F, three oxidation steps are required, hydroxylation at the benzylic position, hydroxylation at either the aromatic ring of Tyr or beta-position of Ile, and oxidative cyclization. UstQ may catalyze the oxidation of a phenol moiety, whereas the ustYa and ustYb are most likely responsible for the remaining two-step oxidations. N-desmethylustiloxin F is then methylated by ustM to yield ustiloxin F which in turn substrate of the cytochrome P450 monooxygenase ustC which catalyzes the formation of S-deoxyustiloxin H. The flavoprotein monooxygenases ustF1 and ustF2 then participate in the modification of the side chain of S-deoxyustiloxin H, leading to the synthesis of an oxime intermediate, via ustiloxin H. Finally, carboxylative dehydration performed by the cysteine desulfurase-like protein ustD yields ustiloxin B. The polypeptide is Glutathione hydrolase (Aspergillus flavus (strain ATCC 200026 / FGSC A1120 / IAM 13836 / NRRL 3357 / JCM 12722 / SRRC 167)).